Here is a 475-residue protein sequence, read N- to C-terminus: Probable L-cysteine desulfhydrase, chloroplastic (475 aa).

A chloroplast-targeting transit peptide spans 1 to 24 (MASSLSPPEEASYHHRHTKRYTSS). The interval 1–40 (MASSLSPPEEASYHHRHTKRYTSSASSASSTTNGTVESSV) is disordered. Positions 22–32 (TSSASSASSTT) are enriched in low complexity. Residue K284 is modified to N6-(pyridoxal phosphate)lysine.

The protein belongs to the class-V pyridoxal-phosphate-dependent aminotransferase family. In terms of assembly, interacts in vitro with QS.

Its subcellular location is the plastid. The protein resides in the chloroplast. May catalyze the production of hydrogen sulfide (H2S) from cysteine. This Arabidopsis thaliana (Mouse-ear cress) protein is Probable L-cysteine desulfhydrase, chloroplastic.